The primary structure comprises 63 residues: Large ribosomal subunit protein bL28 (63 aa).

This sequence belongs to the bacterial ribosomal protein bL28 family.

This Clostridium botulinum (strain Alaska E43 / Type E3) protein is Large ribosomal subunit protein bL28.